The primary structure comprises 210 residues: Pyridoxine/pyridoxamine 5'-phosphate oxidase (210 aa).

Residues Arg7–Tyr10 and Lys65 each bind substrate. Residues Arg60–Lys65, Phe75–Thr76, Arg81, Lys82, and Gln104 each bind FMN. Residues Tyr122, Arg126, and Ser130 each coordinate substrate. Residues Gln139–Ser140 and Trp182 each bind FMN. Position 188–190 (Arg188–His190) interacts with substrate. Arg192 is an FMN binding site.

The protein belongs to the pyridoxamine 5'-phosphate oxidase family. As to quaternary structure, homodimer. FMN is required as a cofactor.

The enzyme catalyses pyridoxamine 5'-phosphate + O2 + H2O = pyridoxal 5'-phosphate + H2O2 + NH4(+). It catalyses the reaction pyridoxine 5'-phosphate + O2 = pyridoxal 5'-phosphate + H2O2. The protein operates within cofactor metabolism; pyridoxal 5'-phosphate salvage; pyridoxal 5'-phosphate from pyridoxamine 5'-phosphate: step 1/1. It functions in the pathway cofactor metabolism; pyridoxal 5'-phosphate salvage; pyridoxal 5'-phosphate from pyridoxine 5'-phosphate: step 1/1. Its function is as follows. Catalyzes the oxidation of either pyridoxine 5'-phosphate (PNP) or pyridoxamine 5'-phosphate (PMP) into pyridoxal 5'-phosphate (PLP). The polypeptide is Pyridoxine/pyridoxamine 5'-phosphate oxidase (Bordetella avium (strain 197N)).